A 197-amino-acid chain; its full sequence is Casparian strip membrane protein 3 (197 aa).

At 1–35 the chain is on the cytoplasmic side; the sequence is MSARVDIPADTSAAAKGTAPLIAASTHVKGGYKKG. Residues 36–56 form a helical membrane-spanning segment; the sequence is LAIFDLVLRLGAVVTALAAAA. The Extracellular segment spans residues 57 to 85; that stretch reads TMGTTDQTLPFFTQFFQFQASYDDLPTFQ. A helical transmembrane segment spans residues 86-106; sequence FFVIAMAIVSGYLVLSLPFSI. At 107 to 119 the chain is on the cytoplasmic side; that stretch reads VAIIRPHATGPRL. Residues 120-140 form a helical membrane-spanning segment; it reads LLIILDTVALTLNTAAAAAAV. At 141–171 the chain is on the extracellular side; the sequence is AIVDLAQNGNSSANWLGICQQFGDFCQKASG. Residue Asn150 is glycosylated (N-linked (GlcNAc...) asparagine). Residues 172–192 traverse the membrane as a helical segment; it reads AVVASFIAAGVLLFLIVISAL. At 193–197 the chain is on the cytoplasmic side; it reads ALRKR.

It belongs to the Casparian strip membrane proteins (CASP) family. In terms of assembly, homodimer and heterodimers.

It is found in the cell membrane. In terms of biological role, regulates membrane-cell wall junctions and localized cell wall deposition. Required for establishment of the Casparian strip membrane domain (CSD) and the subsequent formation of Casparian strips, a cell wall modification of the root endodermis that determines an apoplastic barrier between the intraorganismal apoplasm and the extraorganismal apoplasm and prevents lateral diffusion. The polypeptide is Casparian strip membrane protein 3 (Populus trichocarpa (Western balsam poplar)).